Reading from the N-terminus, the 419-residue chain is Putative zinc metalloprotease SP_0263 (419 aa).

Position 18 (His-18) interacts with Zn(2+). Glu-19 is a catalytic residue. His-22 lines the Zn(2+) pocket. Helical transmembrane passes span 169 to 191, 345 to 367, and 388 to 410; these read LITN…WVLI, ILYF…IPAL, and EIET…AVTW.

It belongs to the peptidase M50B family. Zn(2+) is required as a cofactor.

The protein resides in the cell membrane. This chain is Putative zinc metalloprotease SP_0263, found in Streptococcus pneumoniae serotype 4 (strain ATCC BAA-334 / TIGR4).